The chain runs to 187 residues: Probable RNA 2'-phosphotransferase (187 aa).

It belongs to the KptA/TPT1 family.

Its function is as follows. Removes the 2'-phosphate from RNA via an intermediate in which the phosphate is ADP-ribosylated by NAD followed by a presumed transesterification to release the RNA and generate ADP-ribose 1''-2''-cyclic phosphate (APPR&gt;P). May function as an ADP-ribosylase. The protein is Probable RNA 2'-phosphotransferase of Pseudomonas syringae pv. tomato (strain ATCC BAA-871 / DC3000).